The chain runs to 112 residues: Cell cycle protein GpsB (112 aa).

A coiled-coil region spans residues 42–77 (YQKMADMNNEVVKLSEENNKLKKEVEELRLRVATSR). The interval 75–97 (TSRPSDNKSFSSNNSSSSNNNVD) is disordered. Low complexity predominate over residues 81–95 (NKSFSSNNSSSSNNN).

The protein belongs to the GpsB family. As to quaternary structure, forms polymers through the coiled coil domains. Interacts with PBP1, MreC and EzrA.

The protein localises to the cytoplasm. Divisome component that associates with the complex late in its assembly, after the Z-ring is formed, and is dependent on DivIC and PBP2B for its recruitment to the divisome. Together with EzrA, is a key component of the system that regulates PBP1 localization during cell cycle progression. Its main role could be the removal of PBP1 from the cell pole after pole maturation is completed. Also contributes to the recruitment of PBP1 to the division complex. Not essential for septum formation. This is Cell cycle protein GpsB from Staphylococcus haemolyticus (strain JCSC1435).